The primary structure comprises 114 residues: Flagellar hook-basal body complex protein FliE (114 aa).

It belongs to the FliE family.

Its subcellular location is the bacterial flagellum basal body. The chain is Flagellar hook-basal body complex protein FliE from Burkholderia cenocepacia (strain ATCC BAA-245 / DSM 16553 / LMG 16656 / NCTC 13227 / J2315 / CF5610) (Burkholderia cepacia (strain J2315)).